The primary structure comprises 225 residues: Chalcone--flavanone isomerase 3 (225 aa).

Substrate-binding residues include Thr-51, Asn-116, and Thr-193.

The protein belongs to the chalcone isomerase family.

The enzyme catalyses a chalcone = a flavanone.. Its pathway is secondary metabolite biosynthesis; flavonoid biosynthesis. Functionally, catalyzes the intramolecular cyclization of bicyclic chalcones into tricyclic (S)-flavanones. Responsible for the isomerization of 4,2',4',6'-tetrahydroxychalcone (also termed chalcone) into naringenin. The polypeptide is Chalcone--flavanone isomerase 3 (CHI3) (Lotus japonicus (Lotus corniculatus var. japonicus)).